A 123-amino-acid chain; its full sequence is Small ribosomal subunit protein uS12 (123 aa).

The residue at position 89 (aspartate 89) is a 3-methylthioaspartic acid.

The protein belongs to the universal ribosomal protein uS12 family. Part of the 30S ribosomal subunit. Contacts proteins S8 and S17. May interact with IF1 in the 30S initiation complex.

Functionally, with S4 and S5 plays an important role in translational accuracy. Interacts with and stabilizes bases of the 16S rRNA that are involved in tRNA selection in the A site and with the mRNA backbone. Located at the interface of the 30S and 50S subunits, it traverses the body of the 30S subunit contacting proteins on the other side and probably holding the rRNA structure together. The combined cluster of proteins S8, S12 and S17 appears to hold together the shoulder and platform of the 30S subunit. The chain is Small ribosomal subunit protein uS12 from Anaeromyxobacter dehalogenans (strain 2CP-1 / ATCC BAA-258).